Here is a 137-residue protein sequence, read N- to C-terminus: Nucleoside diphosphate kinase (137 aa).

Positions 9, 57, 85, 91, 102, and 112 each coordinate ATP. His115 functions as the Pros-phosphohistidine intermediate in the catalytic mechanism.

This sequence belongs to the NDK family. As to quaternary structure, homotetramer. Mg(2+) serves as cofactor.

It is found in the cytoplasm. The catalysed reaction is a 2'-deoxyribonucleoside 5'-diphosphate + ATP = a 2'-deoxyribonucleoside 5'-triphosphate + ADP. The enzyme catalyses a ribonucleoside 5'-diphosphate + ATP = a ribonucleoside 5'-triphosphate + ADP. Functionally, major role in the synthesis of nucleoside triphosphates other than ATP. The ATP gamma phosphate is transferred to the NDP beta phosphate via a ping-pong mechanism, using a phosphorylated active-site intermediate. The chain is Nucleoside diphosphate kinase from Geobacter sulfurreducens (strain ATCC 51573 / DSM 12127 / PCA).